The chain runs to 327 residues: GTP 3',8-cyclase (327 aa).

The 213-residue stretch at 21–233 (SYGRRIRKLR…AKIQQKYSLK (213 aa)) folds into the Radical SAM core domain. Residue arginine 30 participates in GTP binding. The [4Fe-4S] cluster site is built by cysteine 37 and cysteine 41. Tyrosine 43 lines the S-adenosyl-L-methionine pocket. Cysteine 44 lines the [4Fe-4S] cluster pocket. Arginine 79 contributes to the GTP binding site. Residue glycine 83 participates in S-adenosyl-L-methionine binding. Position 109 (threonine 109) interacts with GTP. Serine 133 contributes to the S-adenosyl-L-methionine binding site. Residue lysine 169 coordinates GTP. Methionine 203 provides a ligand contact to S-adenosyl-L-methionine. Residues cysteine 265 and cysteine 268 each coordinate [4Fe-4S] cluster. 270 to 272 (RWR) contributes to the GTP binding site. Cysteine 282 is a [4Fe-4S] cluster binding site.

It belongs to the radical SAM superfamily. MoaA family. As to quaternary structure, monomer and homodimer. [4Fe-4S] cluster is required as a cofactor.

The enzyme catalyses GTP + AH2 + S-adenosyl-L-methionine = (8S)-3',8-cyclo-7,8-dihydroguanosine 5'-triphosphate + 5'-deoxyadenosine + L-methionine + A + H(+). The protein operates within cofactor biosynthesis; molybdopterin biosynthesis. Its function is as follows. Catalyzes the cyclization of GTP to (8S)-3',8-cyclo-7,8-dihydroguanosine 5'-triphosphate. The protein is GTP 3',8-cyclase of Synechocystis sp. (strain ATCC 27184 / PCC 6803 / Kazusa).